The primary structure comprises 780 residues: Myosin heavy chain kinase C (780 aa).

One can recognise an Alpha-type protein kinase domain in the interval 40–243 (IGDDLKPKWT…VCDFLKLKPI (204 aa)). Residues 310 to 495 (RIRAQQQQKS…MEQTPDRSEF (186 aa)) are disordered. Residues 337–350 (QQSPSSPTSKPVPQ) show a composition bias toward low complexity. Residues 353–376 (KTPSQSNVVNKSPVSPPKENSNVK) show a composition bias toward polar residues. Positions 380-436 (DNINNNNSSISSNNDNSNNNNNNNDNINNSSNSSSVNSNSSSVSSSSSSSSSSSSSS) are enriched in low complexity. The span at 437–450 (TTNAAPISIQVSRN) shows a compositional bias: polar residues. Positions 458–488 (IQPSSAAASASSTSSSNVPTPESTSTSSMEQ) are enriched in low complexity. WD repeat units follow at residues 507 to 546 (DTVR…HVTN), 549 to 589 (AHGK…TIKE), 591 to 628 (KESN…CVKT), 631 to 668 (GHTR…ILTN), 671 to 708 (GHEG…CVNT), and 748 to 780 (NTRS…WDKM).

This sequence belongs to the protein kinase superfamily. Alpha-type protein kinase family. ALPK subfamily. In terms of assembly, interacts with myosin II heavy chain (mhcA). Post-translationally, autophosphorylated in vitro.

It is found in the cytoplasm. Its subcellular location is the cell cortex. It localises to the membrane. The protein localises to the cleavage furrow. The catalysed reaction is L-threonyl-[myosin heavy-chain] + ATP = O-phospho-L-threonyl-[myosin heavy-chain] + ADP + H(+). Phosphorylates threonine at 'Thr-1823', 'Thr-1833' and 'Thr-2029' in the C-terminal tail region of myosin II heavy chain (mhcA). This phosphorylation is critical in actin-activated ATPase activity of the myosin and regulating the assembly and disassembly of myosin II filament. In vitro, catalytic domain phosphorylates mhcA, myelin basic protein, myosin regulatory light chain, casein and caldesmon. Drives the disassembly of myosin II filaments for efficient cytokinesis and recycling of myosin II that occurs during late cytokinesis. Can be activated in vitro by autophosphorylation. The sequence is that of Myosin heavy chain kinase C (mhkC) from Dictyostelium discoideum (Social amoeba).